The sequence spans 196 residues: Molybdenum cofactor guanylyltransferase (196 aa).

Residues 10 to 12, Lys-23, Asn-51, Asp-69, and Asp-99 each bind GTP; that span reads LAG. Residue Asp-99 coordinates Mg(2+).

It belongs to the MobA family. In terms of assembly, monomer. Mg(2+) is required as a cofactor.

It localises to the cytoplasm. The enzyme catalyses Mo-molybdopterin + GTP + H(+) = Mo-molybdopterin guanine dinucleotide + diphosphate. Its function is as follows. Transfers a GMP moiety from GTP to Mo-molybdopterin (Mo-MPT) cofactor (Moco or molybdenum cofactor) to form Mo-molybdopterin guanine dinucleotide (Mo-MGD) cofactor. The protein is Molybdenum cofactor guanylyltransferase of Shewanella sp. (strain W3-18-1).